A 480-amino-acid chain; its full sequence is Aromatic-L-amino-acid decarboxylase (480 aa).

M1 is subject to N-acetylmethionine. 2 tandem repeats follow at residues 58–115 (GDIE…TELE) and 118–178 (MLDW…TQAA). The interval 58–178 (GDIERIIMPG…AASPELTQAA (121 aa)) is 2 X approximate tandem repeats. T82 lines the substrate pocket. Residues A148 and S149 each contribute to the pyridoxal 5'-phosphate site. H192 lines the substrate pocket. Residues T246 and N300 each coordinate pyridoxal 5'-phosphate. N6-(pyridoxal phosphate)lysine is present on K303.

The protein belongs to the group II decarboxylase family. Homodimer. Pyridoxal 5'-phosphate serves as cofactor.

The catalysed reaction is L-dopa + H(+) = dopamine + CO2. The enzyme catalyses 5-hydroxy-L-tryptophan + H(+) = serotonin + CO2. It participates in catecholamine biosynthesis; dopamine biosynthesis; dopamine from L-tyrosine: step 2/2. Catalyzes the decarboxylation of L-3,4-dihydroxyphenylalanine (DOPA) to dopamine and L-5-hydroxytryptophan to serotonin. The sequence is that of Aromatic-L-amino-acid decarboxylase (DDC) from Cavia porcellus (Guinea pig).